Reading from the N-terminus, the 458-residue chain is Argininosuccinate lyase (458 aa).

Belongs to the lyase 1 family. Argininosuccinate lyase subfamily.

The protein localises to the cytoplasm. The catalysed reaction is 2-(N(omega)-L-arginino)succinate = fumarate + L-arginine. The protein operates within amino-acid biosynthesis; L-arginine biosynthesis; L-arginine from L-ornithine and carbamoyl phosphate: step 3/3. The sequence is that of Argininosuccinate lyase from Salmonella typhi.